A 311-amino-acid polypeptide reads, in one-letter code: Malate dehydrogenase (311 aa).

Residues 7 to 13 (GAAGGIG) and aspartate 34 contribute to the NAD(+) site. Substrate-binding residues include arginine 81 and arginine 87. NAD(+)-binding positions include asparagine 94 and 117-119 (ITN). The substrate site is built by asparagine 119 and arginine 153. Histidine 177 functions as the Proton acceptor in the catalytic mechanism. NAD(+) is bound at residue methionine 227.

It belongs to the LDH/MDH superfamily. MDH type 1 family. As to quaternary structure, homodimer.

It catalyses the reaction (S)-malate + NAD(+) = oxaloacetate + NADH + H(+). In terms of biological role, catalyzes the reversible oxidation of malate to oxaloacetate. This chain is Malate dehydrogenase, found in Shewanella frigidimarina (strain NCIMB 400).